The following is a 377-amino-acid chain: Succinyl-diaminopimelate desuccinylase (377 aa).

His-68 serves as a coordination point for Zn(2+). Asp-70 is a catalytic residue. Asp-101 serves as a coordination point for Zn(2+). Glu-135 functions as the Proton acceptor in the catalytic mechanism. Positions 136, 164, and 350 each coordinate Zn(2+).

The protein belongs to the peptidase M20A family. DapE subfamily. As to quaternary structure, homodimer. Requires Zn(2+) as cofactor. It depends on Co(2+) as a cofactor.

The catalysed reaction is N-succinyl-(2S,6S)-2,6-diaminopimelate + H2O = (2S,6S)-2,6-diaminopimelate + succinate. It participates in amino-acid biosynthesis; L-lysine biosynthesis via DAP pathway; LL-2,6-diaminopimelate from (S)-tetrahydrodipicolinate (succinylase route): step 3/3. In terms of biological role, catalyzes the hydrolysis of N-succinyl-L,L-diaminopimelic acid (SDAP), forming succinate and LL-2,6-diaminopimelate (DAP), an intermediate involved in the bacterial biosynthesis of lysine and meso-diaminopimelic acid, an essential component of bacterial cell walls. The sequence is that of Succinyl-diaminopimelate desuccinylase from Acinetobacter baumannii (strain SDF).